Reading from the N-terminus, the 343-residue chain is UDP-3-O-acylglucosamine N-acyltransferase (343 aa).

The active-site Proton acceptor is the His239.

It belongs to the transferase hexapeptide repeat family. LpxD subfamily. As to quaternary structure, homotrimer.

It catalyses the reaction a UDP-3-O-[(3R)-3-hydroxyacyl]-alpha-D-glucosamine + a (3R)-hydroxyacyl-[ACP] = a UDP-2-N,3-O-bis[(3R)-3-hydroxyacyl]-alpha-D-glucosamine + holo-[ACP] + H(+). Its pathway is bacterial outer membrane biogenesis; LPS lipid A biosynthesis. Functionally, catalyzes the N-acylation of UDP-3-O-acylglucosamine using 3-hydroxyacyl-ACP as the acyl donor. Is involved in the biosynthesis of lipid A, a phosphorylated glycolipid that anchors the lipopolysaccharide to the outer membrane of the cell. The protein is UDP-3-O-acylglucosamine N-acyltransferase of Vibrio parahaemolyticus serotype O3:K6 (strain RIMD 2210633).